The sequence spans 479 residues: GTPase Obg (479 aa).

One can recognise an Obg domain in the interval 2 to 159; the sequence is PRFVDRVVIH…RDLTLELKTV (158 aa). The OBG-type G domain maps to 160 to 340; that stretch reads ADVGLVGFPS…LIFGLWQMVS (181 aa). GTP is bound by residues 166–173, 191–195, 212–215, 292–295, and 321–323; these read GFPSAGKS, FTTLV, DVPG, NKID, and STV. S173 and T193 together coordinate Mg(2+). The OCT domain maps to 358 to 436; it reads PVPVDDSGFD…IGEMTFDWEP (79 aa). Residues 438-479 form a disordered region; it reads TPAGGHVAMSGRGTDVRLERSDRVGAAERKAARRQRRERDDD. Positions 451-467 are enriched in basic and acidic residues; the sequence is TDVRLERSDRVGAAERK.

It belongs to the TRAFAC class OBG-HflX-like GTPase superfamily. OBG GTPase family. In terms of assembly, monomer. Mg(2+) serves as cofactor.

It localises to the cytoplasm. Functionally, an essential GTPase which binds GTP, GDP and possibly (p)ppGpp with moderate affinity, with high nucleotide exchange rates and a fairly low GTP hydrolysis rate. Plays a role in control of the cell cycle, stress response, ribosome biogenesis and in those bacteria that undergo differentiation, in morphogenesis control. This chain is GTPase Obg, found in Mycobacterium marinum (strain ATCC BAA-535 / M).